Here is a 258-residue protein sequence, read N- to C-terminus: Regulatory protein RecX (258 aa).

This sequence belongs to the RecX family.

The protein localises to the cytoplasm. In terms of biological role, modulates RecA activity. This Streptococcus sanguinis (strain SK36) protein is Regulatory protein RecX.